A 723-amino-acid polypeptide reads, in one-letter code: MAALCEAFTLCGLGPAGGVGLGSGLLALEPGADPDHVLLTDRGRTTTLFKVSDQKPLGCWSVKHGQIITCPVVCNFETHEYIAVHDNKVLRIWKDEDVNLDKVFKATLSAEVYRIHSLPHAEPLVLFKGGGVRTLDVLLEAPQQEIENVISDEVIKWSEAFLESRQPVLIFVTEKDGDFFVYVQKPKMRSLHKYKLEQQELCNPLSFTAYIKKQIITLLCLYSSDSVYKVLIPLQQSSEEEEQTSSKSLLLNLSISGSVLKGTSFVVLDKDHVAVLGSLAASGEESKECLTIWNTKFQTLQASKELPLGTSGQLWCYGEKFFFTHGKVLTVVIYKCETSSLAAAVGKLKDSQTSDLSSFVNWNTLGDEELLVSLQSQQSVALKSESKMTLRSKKSAVANIQPDTSTVGQFLLSIKDASTAAVEDQLRQLLSKAQMPDFQATIGCIISALINRCKTDPKFYPRNFLVQMIQKGELSYSLCPDLMAVALEKKDVHLLQICLQRFPDIPEEITYACLKVFLSISDDYLERTDVNLESVISYIDIEPNNKEVKTEVVENGFNTELEEDGCDVTGMKETHMMDSVEFCPVGPQKAALLNAVLHSAYSETFLLPHLKDLPAQQAVLFLRYLHYLYVKCSEKINTTLPGILSPTISQIMDWMCLLLDAHFTVMVMLPEAKGLLSSMHRFVRAQVRLYSELNKIEGSLQELQRIKCQKHSQAYSIEVLELI.

The protein localises to the nucleus. Its subcellular location is the nucleolus. Its function is as follows. Ribosome biogenesis factor. May be required for both optimal rDNA transcription and pre-rRNA processing. This is Nucleolar protein 11 (NOL11) from Gallus gallus (Chicken).